Reading from the N-terminus, the 146-residue chain is Probable glycine cleavage system H protein 1, mitochondrial (146 aa).

The transit peptide at 1-30 (MLKTLRFGTRAFGQNLNIAKRNFCTRYTND) directs the protein to the mitochondrion. The Lipoyl-binding domain maps to 41–123 (NYRLGITDFA…MGDGWIVEYK (83 aa)). Lys-82 is subject to N6-lipoyllysine.

It belongs to the GcvH family. In terms of assembly, the glycine cleavage system is composed of four proteins: P, T, L and H. (R)-lipoate is required as a cofactor.

It localises to the mitochondrion. In terms of biological role, the glycine cleavage system catalyzes the degradation of glycine. The H protein shuttles the methylamine group of glycine from the P protein to the T protein. This is Probable glycine cleavage system H protein 1, mitochondrial (gcvH1) from Dictyostelium discoideum (Social amoeba).